A 290-amino-acid chain; its full sequence is tRNA (adenine(58)-N(1))-methyltransferase catalytic subunit TRMT61A (290 aa).

Residue Ser-2 is modified to N-acetylserine. Substrate regions lie at residues 20–22 (LGH), 35–42 (QTQTRHGV), 64–65 (GW), 85–89 (QILYS), and 110–117 (SGTGSGSV). Residues Leu-87, 114 to 116 (SGS), Glu-135, Arg-140, 163 to 164 (DV), and Asp-181 contribute to the S-adenosyl-L-methionine site. Substrate regions lie at residues 180 to 183 (LDIP) and 205 to 212 (SFSPCIEQ). Ser-264 carries the post-translational modification Phosphoserine. Position 279 (Thr-279) interacts with substrate.

Belongs to the class I-like SAM-binding methyltransferase superfamily. TRM61 family. In terms of assembly, heterotetramer; composed of two copies of TRMT6 and two copies of TRMT61A.

Its subcellular location is the nucleus. The catalysed reaction is adenosine(58) in tRNA + S-adenosyl-L-methionine = N(1)-methyladenosine(58) in tRNA + S-adenosyl-L-homocysteine + H(+). The enzyme catalyses an adenosine in mRNA + S-adenosyl-L-methionine = an N(1)-methyladenosine in mRNA + S-adenosyl-L-homocysteine + H(+). In terms of biological role, catalytic subunit of tRNA (adenine-N(1)-)-methyltransferase, which catalyzes the formation of N(1)-methyladenine at position 58 (m1A58) in initiator methionyl-tRNA. Catalytic subunit of mRNA N(1)-methyltransferase complex, which mediates methylation of adenosine residues at the N(1) position of a small subset of mRNAs: N(1) methylation takes place in tRNA T-loop-like structures of mRNAs and is only present at low stoichiometries. This Mus musculus (Mouse) protein is tRNA (adenine(58)-N(1))-methyltransferase catalytic subunit TRMT61A (Trmt61a).